Consider the following 176-residue polypeptide: MFHATTIVAVKKGEKVAIAGDGQVTFSQNMIMKQNAKKVRKVYNGKVLVGFAGSVADAITLCEKFEEKLEQNSGNLQKSVVELAKEWRQDKILRRLEALMIVANSEHLFVVSGSGEVVEPDDNIAAIGSGGPYALAAARALVQNTNLEPAEIAKKALEIAASICIYTNNNITVLEL.

Thr5 is a catalytic residue. Ala161, Cys164, and Thr167 together coordinate Na(+).

This sequence belongs to the peptidase T1B family. HslV subfamily. A double ring-shaped homohexamer of HslV is capped on each side by a ring-shaped HslU homohexamer. The assembly of the HslU/HslV complex is dependent on binding of ATP.

Its subcellular location is the cytoplasm. It carries out the reaction ATP-dependent cleavage of peptide bonds with broad specificity.. With respect to regulation, allosterically activated by HslU binding. Protease subunit of a proteasome-like degradation complex believed to be a general protein degrading machinery. The chain is ATP-dependent protease subunit HslV from Caldicellulosiruptor saccharolyticus (strain ATCC 43494 / DSM 8903 / Tp8T 6331).